Here is a 309-residue protein sequence, read N- to C-terminus: D-alanine--D-alanine ligase (309 aa).

An ATP-grasp domain is found at 109 to 304; sequence KMVWAACGLP…FTALCLAILE (196 aa). An ATP-binding site is contributed by 135–190; it reads VAELGLPIFVKPVHEGSSMGATKVTAASQLKAAWERAARFDDLVLAEEFIVGAELT. Asp258, Glu271, and Asn273 together coordinate Mg(2+).

This sequence belongs to the D-alanine--D-alanine ligase family. Requires Mg(2+) as cofactor. Mn(2+) serves as cofactor.

It localises to the cytoplasm. It catalyses the reaction 2 D-alanine + ATP = D-alanyl-D-alanine + ADP + phosphate + H(+). It functions in the pathway cell wall biogenesis; peptidoglycan biosynthesis. Its function is as follows. Cell wall formation. In Aromatoleum aromaticum (strain DSM 19018 / LMG 30748 / EbN1) (Azoarcus sp. (strain EbN1)), this protein is D-alanine--D-alanine ligase.